The chain runs to 310 residues: E3 ubiquitin-protein ligase AIP2 (310 aa).

An RING-type; atypical zinc finger spans residues 230–271 (CCICKENLVIGDKMQELPCKHTFHPPCLKPWLDEHNSCPICR). The stretch at 276–306 (TDDQKYENWKEREKEAEEERKGAENAVRGGE) forms a coiled coil. Basic and acidic residues predominate over residues 285 to 298 (KEREKEAEEERKGA). The segment at 285–310 (KEREKEAEEERKGAENAVRGGEYMYV) is disordered.

In terms of assembly, interacts with ABI3 (via C-terminus). Auto-ubiquitinated. As to expression, highly expressed in leaves and at lower levels in flowers and seeds.

The protein localises to the nucleus. It localises to the cytoplasm. The catalysed reaction is S-ubiquitinyl-[E2 ubiquitin-conjugating enzyme]-L-cysteine + [acceptor protein]-L-lysine = [E2 ubiquitin-conjugating enzyme]-L-cysteine + N(6)-ubiquitinyl-[acceptor protein]-L-lysine.. It participates in protein modification; protein ubiquitination. Its function is as follows. E3 ubiquitin-protein ligase that acts as a negative regulator of abscisic acid (ABA) signaling. Mediates ubiquitination and subsequent proteasomal degradation of the transcription factor ABI3. The sequence is that of E3 ubiquitin-protein ligase AIP2 (AIP2) from Arabidopsis thaliana (Mouse-ear cress).